Consider the following 475-residue polypeptide: tRNA-2-methylthio-N(6)-dimethylallyladenosine synthase (475 aa).

Residues 3-120 (KKLHIKTWGC…LPEMIDQIKD (118 aa)) enclose the MTTase N-terminal domain. [4Fe-4S] cluster is bound by residues Cys12, Cys49, Cys83, Cys157, Cys161, and Cys164. Residues 143–375 (RAEGPSAFVS…QDRITQQAMR (233 aa)) form the Radical SAM core domain. One can recognise a TRAM domain in the interval 378–441 (RQMVGTVQRI…TNSLRGVFIR (64 aa)).

Belongs to the methylthiotransferase family. MiaB subfamily. In terms of assembly, monomer. The cofactor is [4Fe-4S] cluster.

Its subcellular location is the cytoplasm. The enzyme catalyses N(6)-dimethylallyladenosine(37) in tRNA + (sulfur carrier)-SH + AH2 + 2 S-adenosyl-L-methionine = 2-methylsulfanyl-N(6)-dimethylallyladenosine(37) in tRNA + (sulfur carrier)-H + 5'-deoxyadenosine + L-methionine + A + S-adenosyl-L-homocysteine + 2 H(+). Functionally, catalyzes the methylthiolation of N6-(dimethylallyl)adenosine (i(6)A), leading to the formation of 2-methylthio-N6-(dimethylallyl)adenosine (ms(2)i(6)A) at position 37 in tRNAs that read codons beginning with uridine. The sequence is that of tRNA-2-methylthio-N(6)-dimethylallyladenosine synthase from Shewanella pealeana (strain ATCC 700345 / ANG-SQ1).